We begin with the raw amino-acid sequence, 444 residues long: Protein translocase subunit SecY (444 aa).

The next 10 helical transmembrane spans lie at 24–44, 77–97, 123–143, 153–173, 181–201, 215–235, 269–289, 318–338, 376–396, and 400–420; these read FFVIGALLVFRAGSFVPIPGI, ILALGIMPYISASIVVQLLTV, GTLVLATFQAIGIATGLPNMV, MFTLIATVSLVTGTMFLMWLG, IGNGISILIFAGIVAGLPKAI, VLLLLLIAVLAFAVIYFVVFM, MAGVIPAIFASSIILFPGTLA, YVMLYAAAIIFFCFFYTALVF, LAGALYITFICLIPEFMMVAW, and FYFGGTSLLIVVVVIMDFMAQ.

It belongs to the SecY/SEC61-alpha family. As to quaternary structure, component of the Sec protein translocase complex. Heterotrimer consisting of SecY, SecE and SecG subunits. The heterotrimers can form oligomers, although 1 heterotrimer is thought to be able to translocate proteins. Interacts with the ribosome. Interacts with SecDF, and other proteins may be involved. Interacts with SecA.

The protein localises to the cell inner membrane. Functionally, the central subunit of the protein translocation channel SecYEG. Consists of two halves formed by TMs 1-5 and 6-10. These two domains form a lateral gate at the front which open onto the bilayer between TMs 2 and 7, and are clamped together by SecE at the back. The channel is closed by both a pore ring composed of hydrophobic SecY resides and a short helix (helix 2A) on the extracellular side of the membrane which forms a plug. The plug probably moves laterally to allow the channel to open. The ring and the pore may move independently. The protein is Protein translocase subunit SecY of Vibrio cholerae serotype O1 (strain ATCC 39315 / El Tor Inaba N16961).